The primary structure comprises 547 residues: MKSLTHLSSYRALSTHFSIIKDLHMRVLFKEDENRGFRYFLQSGDLKLDYSKNRISDETLKLLFDLANECSLKNKIKAMFEGQKINNTENRAVLHTALRNKTNRSVKIDDMDIMPNVREVLAKMQKFSDSLRTGSWLGYTNQIITDVVNIGIGGSDLGALMVCKALKNYAHPRLHMHFVSNVDGTQLQDVLERVHPASTLFIVASKTFSTQETLTNAFTARKWFLKHALDEKHIAKHFVAVSTNKEAVKDFGIEPENMFEFWNWVGGRYSLWSAIGLAIMIYLGKENFSSLLEGAYLMDEHFYNEPFEKNMPVIMALIGIWYINFFDAGSHIIAPYDSVLRYFPKFIQQLDMESNGKQIRKNGKKVDYDTGPIIWGDTGINAQHAFFQLLHQGTHLSPIDLIASLNKKGNLPDHHEILLSNVFAQAEAFMRGKTLEEVQEEMAKKGLKEDQIQKLAPHRVFSGNRPSNILLLDEIHPRSIGSLVALYEHKIFVQGVIWDINSFDQWGVELGKELAKTILSELKGGKTQEHDSSTNHLIQIYKNFNSN.

The active-site Proton donor is the Glu-353. Active-site residues include His-384 and Lys-512.

Belongs to the GPI family.

It is found in the cytoplasm. The enzyme catalyses alpha-D-glucose 6-phosphate = beta-D-fructose 6-phosphate. Its pathway is carbohydrate biosynthesis; gluconeogenesis. It functions in the pathway carbohydrate degradation; glycolysis; D-glyceraldehyde 3-phosphate and glycerone phosphate from D-glucose: step 2/4. Catalyzes the reversible isomerization of glucose-6-phosphate to fructose-6-phosphate. This is Glucose-6-phosphate isomerase from Campylobacter jejuni subsp. doylei (strain ATCC BAA-1458 / RM4099 / 269.97).